The following is a 293-amino-acid chain: Ribosomal protein L11 methyltransferase (293 aa).

The S-adenosyl-L-methionine site is built by Thr-145, Gly-166, Asp-188, and Asn-230.

It belongs to the methyltransferase superfamily. PrmA family.

It is found in the cytoplasm. The enzyme catalyses L-lysyl-[protein] + 3 S-adenosyl-L-methionine = N(6),N(6),N(6)-trimethyl-L-lysyl-[protein] + 3 S-adenosyl-L-homocysteine + 3 H(+). In terms of biological role, methylates ribosomal protein L11. The polypeptide is Ribosomal protein L11 methyltransferase (Mannheimia succiniciproducens (strain KCTC 0769BP / MBEL55E)).